The chain runs to 367 residues: 3-dehydroquinate synthase (367 aa).

Residues 111-115, 135-136, K148, K157, and 175-178 contribute to the NAD(+) site; these read GVVGD, TS, and TLDT. Zn(2+) is bound by residues E190, H254, and H271.

The protein belongs to the sugar phosphate cyclases superfamily. Dehydroquinate synthase family. It depends on Co(2+) as a cofactor. Zn(2+) serves as cofactor. Requires NAD(+) as cofactor.

The protein localises to the cytoplasm. The enzyme catalyses 7-phospho-2-dehydro-3-deoxy-D-arabino-heptonate = 3-dehydroquinate + phosphate. Its pathway is metabolic intermediate biosynthesis; chorismate biosynthesis; chorismate from D-erythrose 4-phosphate and phosphoenolpyruvate: step 2/7. In terms of biological role, catalyzes the conversion of 3-deoxy-D-arabino-heptulosonate 7-phosphate (DAHP) to dehydroquinate (DHQ). This is 3-dehydroquinate synthase from Salinibacter ruber (strain DSM 13855 / M31).